Consider the following 423-residue polypeptide: UPF0229 protein PST_0721 (423 aa).

The tract at residues 84–109 is disordered; that stretch reads AGERIPRPQGGGGGQGAGQASNSGEG.

It belongs to the UPF0229 family.

This Stutzerimonas stutzeri (strain A1501) (Pseudomonas stutzeri) protein is UPF0229 protein PST_0721.